The sequence spans 88 residues: DNA-directed RNA polymerase subunit omega (88 aa).

This sequence belongs to the RNA polymerase subunit omega family. The RNAP catalytic core consists of 2 alpha, 1 beta, 1 beta' and 1 omega subunit. When a sigma factor is associated with the core the holoenzyme is formed, which can initiate transcription.

It catalyses the reaction RNA(n) + a ribonucleoside 5'-triphosphate = RNA(n+1) + diphosphate. In terms of biological role, promotes RNA polymerase assembly. Latches the N- and C-terminal regions of the beta' subunit thereby facilitating its interaction with the beta and alpha subunits. In Anaeromyxobacter dehalogenans (strain 2CP-1 / ATCC BAA-258), this protein is DNA-directed RNA polymerase subunit omega.